Consider the following 310-residue polypeptide: Methionyl-tRNA formyltransferase (310 aa).

Position 111 to 114 (111 to 114 (SILP)) interacts with (6S)-5,6,7,8-tetrahydrofolate.

It belongs to the Fmt family.

It catalyses the reaction L-methionyl-tRNA(fMet) + (6R)-10-formyltetrahydrofolate = N-formyl-L-methionyl-tRNA(fMet) + (6S)-5,6,7,8-tetrahydrofolate + H(+). Functionally, attaches a formyl group to the free amino group of methionyl-tRNA(fMet). The formyl group appears to play a dual role in the initiator identity of N-formylmethionyl-tRNA by promoting its recognition by IF2 and preventing the misappropriation of this tRNA by the elongation apparatus. The chain is Methionyl-tRNA formyltransferase from Finegoldia magna (strain ATCC 29328 / DSM 20472 / WAL 2508) (Peptostreptococcus magnus).